The sequence spans 482 residues: Docking protein 1 (482 aa).

Met1 is modified (N-acetylmethionine). A PH domain is found at 4-119 (AVMEGPLFLQ…WVQTLCRTAF (116 aa)). At Ser48 the chain carries Phosphoserine. The IRS-type PTB domain maps to 151-259 (EGSQFWVTSQ…QQQKAQGKVG (109 aa)). Phosphoserine occurs at positions 269 and 290. The disordered stretch occupies residues 269 to 328 (SHDGETEGKTVPPPVPQDPLGSPPALYAEPLDSLRIPPGPSQDSVYSDPLGSTPAGAGEG). Residues Tyr295, Tyr336, Tyr340, Tyr361, and Tyr376 each carry the phosphotyrosine modification. The disordered stretch occupies residues 353–373 (TDSKEDPIYDEPEGLAPAPPR). Tyr397 bears the Phosphotyrosine; by INSR mark. The tract at residues 398–482 (ELPYNPATDD…RAGVKSEGST (85 aa)) is disordered. The residue at position 408 (Tyr408) is a Phosphotyrosine. Residues 410 to 423 (VPPPRSPKPAPAPK) are compositionally biased toward pro residues. Position 415 is a phosphoserine (Ser415). Polar residues predominate over residues 432 to 459 (SGTTRGSGSKGFSSDTALYSQVQKSGTS). Phosphotyrosine is present on Tyr450.

The protein belongs to the DOK family. Type A subfamily. As to quaternary structure, interacts with RasGAP, INPP5D/SHIP1 and ABL1. Interacts directly with phosphorylated ITGB3. Interacts with SRMS (via the SH2 and SH3 domains). Post-translationally, constitutively tyrosine-phosphorylated. Phosphorylated by TEC. Phosphorylated on tyrosine residues by the insulin receptor kinase. Results in the negative regulation of the insulin signaling pathway. Phosphorylated by LYN. Phosphorylated on tyrosine residues by SRMS. In terms of tissue distribution, expressed in lung, spleen, skeletal muscle and kidney.

The protein resides in the cytoplasm. It is found in the nucleus. DOK proteins are enzymatically inert adaptor or scaffolding proteins. They provide a docking platform for the assembly of multimolecular signaling complexes. DOK1 appears to be a negative regulator of the insulin signaling pathway. Modulates integrin activation by competing with talin for the same binding site on ITGB3. The protein is Docking protein 1 (Dok1) of Mus musculus (Mouse).